Here is a 1399-residue protein sequence, read N- to C-terminus: DNA-directed RNA polymerase subunit beta' (1399 aa).

Zn(2+)-binding residues include Cys71, Cys73, Cys86, and Cys89. The Mg(2+) site is built by Asp462, Asp464, and Asp466. Positions 810, 884, 891, and 894 each coordinate Zn(2+). The disordered stretch occupies residues 1376 to 1399; it reads EREKQAAITPAAPEAEPLALPPAE.

This sequence belongs to the RNA polymerase beta' chain family. In terms of assembly, the RNAP catalytic core consists of 2 alpha, 1 beta, 1 beta' and 1 omega subunit. When a sigma factor is associated with the core the holoenzyme is formed, which can initiate transcription. It depends on Mg(2+) as a cofactor. The cofactor is Zn(2+).

It carries out the reaction RNA(n) + a ribonucleoside 5'-triphosphate = RNA(n+1) + diphosphate. In terms of biological role, DNA-dependent RNA polymerase catalyzes the transcription of DNA into RNA using the four ribonucleoside triphosphates as substrates. The chain is DNA-directed RNA polymerase subunit beta' from Afipia carboxidovorans (strain ATCC 49405 / DSM 1227 / KCTC 32145 / OM5) (Oligotropha carboxidovorans).